A 154-amino-acid chain; its full sequence is Universal stress protein Sll1388 (154 aa).

It belongs to the universal stress protein A family.

This is Universal stress protein Sll1388 from Synechocystis sp. (strain ATCC 27184 / PCC 6803 / Kazusa).